The primary structure comprises 78 residues: Small ribosomal subunit protein bS18B (78 aa).

The tract at residues 1 to 22 (MPRKPVRKVASTPRPNPLDQNG) is disordered.

Belongs to the bacterial ribosomal protein bS18 family. Part of the 30S ribosomal subunit. Forms a tight heterodimer with protein bS6.

Its function is as follows. Binds as a heterodimer with protein bS6 to the central domain of the 16S rRNA, where it helps stabilize the platform of the 30S subunit. The polypeptide is Small ribosomal subunit protein bS18B (Streptomyces avermitilis (strain ATCC 31267 / DSM 46492 / JCM 5070 / NBRC 14893 / NCIMB 12804 / NRRL 8165 / MA-4680)).